The following is a 312-amino-acid chain: Olfactory receptor 10K2 (312 aa).

Over 1–25 (MERVNETVVREVIFLGFSSLARLQQ) the chain is Extracellular. A glycan (N-linked (GlcNAc...) asparagine) is linked at Asn5. Residues 26–46 (LLFVIFLLLYLFTLGTNAIII) form a helical membrane-spanning segment. Topologically, residues 47–54 (STIVLDRA) are cytoplasmic. Residues 55–75 (LHIPMYFFLAILSCSEICYTF) traverse the membrane as a helical segment. Residues 76–99 (IIVPKMLVDLLSQKKTISFLGCAI) are Extracellular-facing. The chain crosses the membrane as a helical span at residues 100-120 (QMFSFLFLGCSHSFLLAVMGY). The Cytoplasmic segment spans residues 121-139 (DRYIAICNPLRYSVLMGHG). A helical membrane pass occupies residues 140–160 (VCMGLVAAACACGFTVAQIIT). Over 161 to 197 (SLVFHLPFYSSNQLHHFFCDIAPVLKLASHHNHFSQI) the chain is Extracellular. A helical transmembrane segment spans residues 198 to 217 (VIFMLCTLVLAIPLLLILVS). Over 218–237 (YVHILSAILQFPSTLGRCKA) the chain is Cytoplasmic. A helical membrane pass occupies residues 238-258 (FSTCVSHLIIVTVHYGCASFI). The Extracellular portion of the chain corresponds to 259 to 271 (YLRPQSNYSSSQD). Asn265 is a glycosylation site (N-linked (GlcNAc...) asparagine). Residues 272–292 (ALISVSYTIITPLFNPMIYSL) form a helical membrane-spanning segment. The Cytoplasmic segment spans residues 293 to 312 (RNKEFKSALCKIVRRTISLL).

This sequence belongs to the G-protein coupled receptor 1 family.

Its subcellular location is the cell membrane. Its function is as follows. Odorant receptor. The chain is Olfactory receptor 10K2 (OR10K2) from Homo sapiens (Human).